The chain runs to 562 residues: Arginine--tRNA ligase 1 (562 aa).

The short motif at 122 to 132 is the 'HIGH' region element; that stretch reads PNIAKPFSMGH.

Belongs to the class-I aminoacyl-tRNA synthetase family. Monomer.

The protein localises to the cytoplasm. It catalyses the reaction tRNA(Arg) + L-arginine + ATP = L-arginyl-tRNA(Arg) + AMP + diphosphate. This is Arginine--tRNA ligase 1 from Bacillus cereus (strain ZK / E33L).